The sequence spans 288 residues: Syntaxin-1B (288 aa).

Residues 1-13 show a composition bias toward basic and acidic residues; the sequence is MKDRTQELRSAKD. A disordered region spans residues 1-20; that stretch reads MKDRTQELRSAKDSDDEEEV. Residues 1-264 are Cytoplasmic-facing; sequence MKDRTQELRS…KYQSKARRKK (264 aa). A phosphoserine mark is found at Ser10 and Ser14. Residues 29–104 are a coiled coil; that stretch reads MDEFFEQVEE…IEQSIEQEEG (76 aa). The 63-residue stretch at 191 to 253 folds into the t-SNARE coiled-coil homology domain; it reads LNEIETRHNE…ERAVSDTKKA (63 aa). Residues 265–288 traverse the membrane as a helical; Anchor for type IV membrane protein segment; it reads IMIIICCVVLGVVLASSIGGTLGL.

The protein belongs to the syntaxin family. As to quaternary structure, interacts with OTOF. Interacts with SYT6 and SYT8; the interaction is Ca(2+)-dependent. Post-translationally, phosphorylated by CK2.

It localises to the membrane. The protein localises to the nucleus. Its subcellular location is the cytoplasm. It is found in the cytoskeleton. The protein resides in the microtubule organizing center. It localises to the centrosome. The protein localises to the spindle. Its function is as follows. Potentially involved in docking of synaptic vesicles at presynaptic active zones. May mediate Ca(2+)-regulation of exocytosis acrosomal reaction in sperm. In Homo sapiens (Human), this protein is Syntaxin-1B (STX1B).